The sequence spans 201 residues: uncharacterized protein (201 aa).

A disordered region spans residues 121–141 (HHRTRPGRGPGPRPGGSAMAG).

This is an uncharacterized protein from Mycobacterium tuberculosis (strain ATCC 25618 / H37Rv).